We begin with the raw amino-acid sequence, 217 residues long: Large ribosomal subunit protein uL3 (217 aa).

Residues 133–145 (GRASHGNSRSHNV) show a composition bias toward polar residues. The interval 133–153 (GRASHGNSRSHNVPGSIGMAQ) is disordered. Residue Gln-153 is modified to N5-methylglutamine.

Belongs to the universal ribosomal protein uL3 family. Part of the 50S ribosomal subunit. Forms a cluster with proteins L14 and L19. Post-translationally, methylated by PrmB.

Functionally, one of the primary rRNA binding proteins, it binds directly near the 3'-end of the 23S rRNA, where it nucleates assembly of the 50S subunit. This Ralstonia pickettii (strain 12J) protein is Large ribosomal subunit protein uL3.